Here is a 225-residue protein sequence, read N- to C-terminus: Ribosome maturation factor RimM (225 aa).

Residues 144–225 form the PRC barrel domain; that stretch reads ADEFYWVDLI…RIVVDWEADY (82 aa).

Belongs to the RimM family. In terms of assembly, binds ribosomal protein uS19.

It is found in the cytoplasm. An accessory protein needed during the final step in the assembly of 30S ribosomal subunit, possibly for assembly of the head region. Essential for efficient processing of 16S rRNA. May be needed both before and after RbfA during the maturation of 16S rRNA. It has affinity for free ribosomal 30S subunits but not for 70S ribosomes. The sequence is that of Ribosome maturation factor RimM from Burkholderia ambifaria (strain MC40-6).